The primary structure comprises 400 residues: NADH-quinone oxidoreductase subunit D (400 aa).

The protein belongs to the complex I 49 kDa subunit family. NDH-1 is composed of 14 different subunits. Subunits NuoB, C, D, E, F, and G constitute the peripheral sector of the complex.

It is found in the cell inner membrane. It carries out the reaction a quinone + NADH + 5 H(+)(in) = a quinol + NAD(+) + 4 H(+)(out). In terms of biological role, NDH-1 shuttles electrons from NADH, via FMN and iron-sulfur (Fe-S) centers, to quinones in the respiratory chain. The immediate electron acceptor for the enzyme in this species is believed to be a menaquinone. Couples the redox reaction to proton translocation (for every two electrons transferred, four hydrogen ions are translocated across the cytoplasmic membrane), and thus conserves the redox energy in a proton gradient. This is NADH-quinone oxidoreductase subunit D from Chlorobaculum parvum (strain DSM 263 / NCIMB 8327) (Chlorobium vibrioforme subsp. thiosulfatophilum).